We begin with the raw amino-acid sequence, 242 residues long: MALKNKFSCLWILGLCLVATTSSKIPSITDPHFIDNCIEAHNEWRGKVNPPAADMKYMIWDKGLAKMAKAWANQCKFEHNDCLDKSYKCYAAFEYVGENIWLGGIKSFTPRHAITAWYNETQFYDFDSLSCSRVCGHYTQLVWANSFYVGCAVAMCPNLGGASTAIFVCNYGPAGNFANMPPYVRGESCSLCSKEEKCVKNLCRTPQLIIPNQNPFLKPTGRAPQQTAFNPFSLGFLLLRIF.

Residues 1-22 (MALKNKFSCLWILGLCLVATTS) form the signal peptide. In terms of domain architecture, SCP spans 39–171 (EAHNEWRGKV…ASTAIFVCNY (133 aa)). A glycan (N-linked (GlcNAc...) asparagine) is linked at N119. G221 is lipidated: GPI-anchor amidated glycine. The propeptide at 222 to 242 (RAPQQTAFNPFSLGFLLLRIF) is removed in mature form.

Belongs to the CRISP family. In terms of assembly, part of a oolemmal binding multimeric complex (IZUMO1 complex) composed at least of IZUMO1 and GLIPR1L1; the complex assemblage is influenced by the maturation status of the male germ cell. Interacts with IZUMO1. In terms of processing, N-glycosylated. N-glycosylation decreases during the transit in the caput. As to expression, highly expressed in testis.

It localises to the cytoplasmic vesicle. It is found in the secretory vesicle. The protein localises to the acrosome. Its subcellular location is the cell membrane. The protein resides in the membrane raft. It localises to the secreted. In terms of biological role, required for optimal fertilization at the stage of sperm-oocyte fusion, plays a role in optimizing acrosome function, the translocation of IZUMO1 during the acrosome reaction and the fertilization process. Component of epididymosomes, one type of membranous microvesicules which mediate the transfer of lipids and proteins to spermatozoa plasma membrane during epididymal maturation. Also component of the CD9-positive microvesicules found in the cauda region. This is GLIPR1-like protein 1 (GLIPR1L1) from Homo sapiens (Human).